A 198-amino-acid chain; its full sequence is Probable GTP-binding protein EngB (198 aa).

The region spanning 36 to 198 (SEPQFAFIGR…NLSKLQELLE (163 aa)) is the EngB-type G domain. Residues 44 to 51 (GRSNVGKS), 70 to 74 (GRTQL), 88 to 91 (DLPG), 155 to 158 (NKID), and 182 to 184 (ISA) each bind GTP. The Mg(2+) site is built by serine 51 and threonine 72.

Belongs to the TRAFAC class TrmE-Era-EngA-EngB-Septin-like GTPase superfamily. EngB GTPase family. It depends on Mg(2+) as a cofactor.

Necessary for normal cell division and for the maintenance of normal septation. The protein is Probable GTP-binding protein EngB of Mesomycoplasma hyopneumoniae (strain 232) (Mycoplasma hyopneumoniae).